We begin with the raw amino-acid sequence, 299 residues long: Protoheme IX farnesyltransferase 1 (299 aa).

9 helical membrane-spanning segments follow: residues 25 to 45 (VVVL…RAGV), 47 to 67 (WSVL…AAVV), 95 to 115 (LPAL…LLAF), 119 to 139 (LTAW…TGFL), 147 to 167 (IVIG…AVSG), 173 to 193 (PLLL…ALAI), 217 to 237 (ALHI…PYAI), 243 to 263 (LYLA…WVLY), and 279 to 299 (IGYL…LLNL).

The protein belongs to the UbiA prenyltransferase family. Protoheme IX farnesyltransferase subfamily.

It localises to the cell inner membrane. It catalyses the reaction heme b + (2E,6E)-farnesyl diphosphate + H2O = Fe(II)-heme o + diphosphate. It functions in the pathway porphyrin-containing compound metabolism; heme O biosynthesis; heme O from protoheme: step 1/1. In terms of biological role, converts heme B (protoheme IX) to heme O by substitution of the vinyl group on carbon 2 of heme B porphyrin ring with a hydroxyethyl farnesyl side group. This chain is Protoheme IX farnesyltransferase 1, found in Pseudomonas entomophila (strain L48).